A 257-amino-acid chain; its full sequence is NAD-capped RNA hydrolase NudC (257 aa).

Residue Arg-69 participates in substrate binding. Positions 98 and 101 each coordinate Zn(2+). Substrate is bound at residue Glu-111. Positions 116 and 119 each coordinate Zn(2+). Tyr-124 lines the substrate pocket. The Nudix hydrolase domain occupies 125–248 (PQIAPCIIVA…TVARRLIEDT (124 aa)). Ala-158, Glu-174, and Glu-178 together coordinate a divalent metal cation. Positions 159–180 (GFVEVGETLEQAVAREVMEESG) match the Nudix box motif. 192–199 (QPWPFPQS) serves as a coordination point for substrate. An a divalent metal cation-binding site is contributed by Glu-219. Ala-241 contacts substrate.

Belongs to the Nudix hydrolase family. NudC subfamily. Homodimer. It depends on Mg(2+) as a cofactor. Mn(2+) serves as cofactor. The cofactor is Zn(2+).

It carries out the reaction a 5'-end NAD(+)-phospho-ribonucleoside in mRNA + H2O = a 5'-end phospho-adenosine-phospho-ribonucleoside in mRNA + beta-nicotinamide D-ribonucleotide + 2 H(+). It catalyses the reaction NAD(+) + H2O = beta-nicotinamide D-ribonucleotide + AMP + 2 H(+). The catalysed reaction is NADH + H2O = reduced beta-nicotinamide D-ribonucleotide + AMP + 2 H(+). Its function is as follows. mRNA decapping enzyme that specifically removes the nicotinamide adenine dinucleotide (NAD) cap from a subset of mRNAs by hydrolyzing the diphosphate linkage to produce nicotinamide mononucleotide (NMN) and 5' monophosphate mRNA. The NAD-cap is present at the 5'-end of some mRNAs and stabilizes RNA against 5'-processing. Has preference for mRNAs with a 5'-end purine. Catalyzes the hydrolysis of a broad range of dinucleotide pyrophosphates. The protein is NAD-capped RNA hydrolase NudC of Klebsiella pneumoniae subsp. pneumoniae (strain ATCC 700721 / MGH 78578).